The sequence spans 210 residues: ATP-dependent dethiobiotin synthetase BioD (210 aa).

13-18 (GIGKTV) is a binding site for ATP. T17 is a binding site for Mg(2+). Residue K33 is part of the active site. E101 contributes to the Mg(2+) binding site. ATP contacts are provided by residues 101-104 (EGAG) and 185-187 (PWL).

The protein belongs to the dethiobiotin synthetase family. Homodimer. Mg(2+) is required as a cofactor.

The protein resides in the cytoplasm. It catalyses the reaction (7R,8S)-7,8-diammoniononanoate + CO2 + ATP = (4R,5S)-dethiobiotin + ADP + phosphate + 3 H(+). It functions in the pathway cofactor biosynthesis; biotin biosynthesis; biotin from 7,8-diaminononanoate: step 1/2. Catalyzes a mechanistically unusual reaction, the ATP-dependent insertion of CO2 between the N7 and N8 nitrogen atoms of 7,8-diaminopelargonic acid (DAPA, also called 7,8-diammoniononanoate) to form a ureido ring. The protein is ATP-dependent dethiobiotin synthetase BioD of Bradyrhizobium sp. (strain BTAi1 / ATCC BAA-1182).